We begin with the raw amino-acid sequence, 177 residues long: UPF0316 protein STH2077 (177 aa).

2 helical membrane passes run 9 to 29 (AALD…VNTV) and 41 to 61 (LASA…GLVV).

This sequence belongs to the UPF0316 family.

The protein localises to the cell membrane. The sequence is that of UPF0316 protein STH2077 from Symbiobacterium thermophilum (strain DSM 24528 / JCM 14929 / IAM 14863 / T).